Here is a 196-residue protein sequence, read N- to C-terminus: Imidazole glycerol phosphate synthase subunit HisH (196 aa).

Residues 2–196 (NVVIVDTECA…LKRFLELTLC (195 aa)) enclose the Glutamine amidotransferase type-1 domain. Cysteine 77 (nucleophile) is an active-site residue. Catalysis depends on residues histidine 175 and glutamate 177.

As to quaternary structure, heterodimer of HisH and HisF.

It is found in the cytoplasm. It carries out the reaction 5-[(5-phospho-1-deoxy-D-ribulos-1-ylimino)methylamino]-1-(5-phospho-beta-D-ribosyl)imidazole-4-carboxamide + L-glutamine = D-erythro-1-(imidazol-4-yl)glycerol 3-phosphate + 5-amino-1-(5-phospho-beta-D-ribosyl)imidazole-4-carboxamide + L-glutamate + H(+). The enzyme catalyses L-glutamine + H2O = L-glutamate + NH4(+). It participates in amino-acid biosynthesis; L-histidine biosynthesis; L-histidine from 5-phospho-alpha-D-ribose 1-diphosphate: step 5/9. IGPS catalyzes the conversion of PRFAR and glutamine to IGP, AICAR and glutamate. The HisH subunit catalyzes the hydrolysis of glutamine to glutamate and ammonia as part of the synthesis of IGP and AICAR. The resulting ammonia molecule is channeled to the active site of HisF. In Idiomarina loihiensis (strain ATCC BAA-735 / DSM 15497 / L2-TR), this protein is Imidazole glycerol phosphate synthase subunit HisH.